The following is a 351-amino-acid chain: Ribosomal RNA large subunit methyltransferase M (351 aa).

Residues Ser186, 219–222 (APGG), Asp238, Asp258, and Asp274 contribute to the S-adenosyl-L-methionine site. Lys303 functions as the Proton acceptor in the catalytic mechanism.

The protein belongs to the class I-like SAM-binding methyltransferase superfamily. RNA methyltransferase RlmE family. RlmM subfamily. Monomer.

The protein resides in the cytoplasm. The catalysed reaction is cytidine(2498) in 23S rRNA + S-adenosyl-L-methionine = 2'-O-methylcytidine(2498) in 23S rRNA + S-adenosyl-L-homocysteine + H(+). Its function is as follows. Catalyzes the 2'-O-methylation at nucleotide C2498 in 23S rRNA. The chain is Ribosomal RNA large subunit methyltransferase M from Xylella fastidiosa (strain 9a5c).